The sequence spans 451 residues: Enolase (451 aa).

(2R)-2-phosphoglycerate is bound at residue Gln-163. Catalysis depends on Glu-205, which acts as the Proton donor. 3 residues coordinate Mg(2+): Asp-258, Glu-308, and Asp-335. Residues Lys-360, Arg-389, Ser-390, and Lys-411 each contribute to the (2R)-2-phosphoglycerate site. Lys-360 functions as the Proton acceptor in the catalytic mechanism.

Belongs to the enolase family. The cofactor is Mg(2+).

The protein resides in the cytoplasm. It localises to the secreted. It is found in the cell surface. The enzyme catalyses (2R)-2-phosphoglycerate = phosphoenolpyruvate + H2O. Its pathway is carbohydrate degradation; glycolysis; pyruvate from D-glyceraldehyde 3-phosphate: step 4/5. Functionally, catalyzes the reversible conversion of 2-phosphoglycerate (2-PG) into phosphoenolpyruvate (PEP). It is essential for the degradation of carbohydrates via glycolysis. The chain is Enolase from Mycoplasma capricolum subsp. capricolum (strain California kid / ATCC 27343 / NCTC 10154).